Here is an 87-residue protein sequence, read N- to C-terminus: Exodeoxyribonuclease 7 small subunit (87 aa).

Belongs to the XseB family. In terms of assembly, heterooligomer composed of large and small subunits.

It is found in the cytoplasm. It carries out the reaction Exonucleolytic cleavage in either 5'- to 3'- or 3'- to 5'-direction to yield nucleoside 5'-phosphates.. Its function is as follows. Bidirectionally degrades single-stranded DNA into large acid-insoluble oligonucleotides, which are then degraded further into small acid-soluble oligonucleotides. The polypeptide is Exodeoxyribonuclease 7 small subunit (Serratia proteamaculans (strain 568)).